The sequence spans 569 residues: MVVIAALLGSLAVLAFLFYLWYLTIFIIVHKNQQYLEQTKALYNKLKLSNFNSVIVPFQLLRSEKKALEQPVKLLKSFQESFNSEINSALEQLLVFSEPKALYNCFWFNRNIKLLRKNLQGLHDKQQRYVKLTKNAIAYFDSSYDTLVFYRQAFCLLVSFINDFLVHKYDSLFYLNIINRISLLFKDVELHIKNKDVKQQNQALNKLHNNLAQTIITASRQYFFDVKVGYLNYHFQILSQKVTQLRSMKNKAINSQEVAKFQELITNIGATLAECSQALGNINLALCEQRINQAKEQIDVLSNAVSVKEKAISLVVSNVDSFLKSINHYQQQNALLQTLMKEIELMFQNNLDTVNIINQINEHSLLIAQKTQLLNQENALTEFIDYEKLFRLMSEAMKLLDGLKNLLNELFALSANKFDDYRFFVYTLDDFRFKFFQIENLIANEELIISEKTLKIISQAKHQFDDIFTQAKNDYEGAFSYLNEKVRFFQNQLTHVIVDVVGLMNLRSMCKHTFIFANKYRQESPQINESLETLTQFYQQQNYSETLSGLISLLGKIKSSAKQHHLDLN.

Residues 2-22 (VVIAALLGSLAVLAFLFYLWY) traverse the membrane as a helical segment.

The protein localises to the membrane. This is an uncharacterized protein from Mycoplasma pneumoniae (strain ATCC 29342 / M129 / Subtype 1) (Mycoplasmoides pneumoniae).